We begin with the raw amino-acid sequence, 804 residues long: Endoplasmin (804 aa).

The signal sequence occupies residues 1–21 (MRALWVLGLCCVLLTFGSVRA). Positions 42–44 (SRT) match the SRT pseudosubstrate motif motif. N-linked (GlcNAc...) asparagine glycosylation is present at Asn-62. The residue at position 64 (Ser-64) is a Phosphoserine. N-linked (GlcNAc...) asparagine glycosylation is present at Asn-107. Residues Asn-107, Asp-149, and Asn-162 each coordinate ATP. An N6-(2-hydroxyisobutyryl)lysine modification is found at Lys-168. Position 172 is a phosphoserine (Ser-172). Phe-199 contributes to the ATP binding site. An N-linked (GlcNAc...) asparagine glycan is attached at Asn-217. Residues 288-323 (TVEEPMEEEEAAKEEKEESDDEAAVEEEEEEKKPKT) form a disordered region. The span at 289–317 (VEEPMEEEEAAKEEKEESDDEAAVEEEEE) shows a compositional bias: acidic residues. A phosphoserine mark is found at Ser-306 and Ser-403. An N6-succinyllysine modification is found at Lys-404. Residue Asn-445 is glycosylated (N-linked (GlcNAc...) asparagine). At Ser-447 the chain carries Phosphoserine. At Lys-479 the chain carries N6-acetyllysine. 2 N-linked (GlcNAc...) asparagine glycosylation sites follow: Asn-481 and Asn-502. Lys-633 bears the N6-succinyllysine mark. Positions 750 to 804 (DPDAKVEEEPEEEPEETTEDTTEDTEQDEDEEMDVGTDEEEQETAKESTAEKDEL) are disordered. A compositionally biased stretch (acidic residues) spans 757–791 (EEPEEEPEETTEDTTEDTEQDEDEEMDVGTDEEEQ). Thr-786 is subject to Phosphothreonine. Basic and acidic residues predominate over residues 792-804 (ETAKESTAEKDEL). Positions 801-804 (KDEL) match the Prevents secretion from ER motif.

This sequence belongs to the heat shock protein 90 family. As to quaternary structure, homodimer; disulfide-linked. Component of an EIF2 complex at least composed of CELF1/CUGBP1, CALR, CALR3, EIF2S1, EIF2S2, HSP90B1 and HSPA5. Part of a large chaperone multiprotein complex comprising DNAJB11, HSP90B1, HSPA5, HYOU, PDIA2, PDIA4, PDIA6, PPIB, SDF2L1, UGGT1 and very small amounts of ERP29, but not, or at very low levels, CALR nor CANX. Interacts with AIMP1; regulates its retention in the endoplasmic reticulum. Hyperglycosylated form interacts with OS9; promoting its degradation by the endoplasmic reticulum associated degradation (ERAD). Interacts with CNPY3. This interaction is disrupted in the presence of ATP. Interacts with TLR4 and TLR9, but not with TLR3. Interacts with MZB1 in a calcium-dependent manner. Interacts with METTL23. Interacts with IL1B; the interaction facilitates cargo translocation into the ERGIC. Interacts with EIF2AK3. Post-translationally, phosphorylated by CK2. N-glycosylated cotranslationally at Asn-217 by STT3A-containing OST-A complex: this glycosylation is constitutive. In response to various stress, 5 additional facultative sites (Asn-62, Asn-107, Asn-445, Asn-481 and Asn-502) can be glycosylated post-translationally by STT3B-containing OST-B complex, leading to a hyperglycosylated form that is degraded by the ER-associated degradation (ERAD) pathway. In normal conditions, the OST-A complex together with CCDC134 prevent glycosylation at facultative sites during protein folding, thereby preventing hyperglycosylation. Mechanistically, nascent HSP90B1 is tethered during translation to a specialized CCDC134-containing translocon that forms a microenvironment for its folding, in which STT3A associates with the SRT pseudosubstrate motif, and prevents access to facultative glycosylation sites until folding is completed, rendering its facultative sites inaccessible to the OST-B complex.

Its subcellular location is the endoplasmic reticulum lumen. It is found in the sarcoplasmic reticulum lumen. The protein localises to the melanosome. It carries out the reaction ATP + H2O = ADP + phosphate + H(+). In terms of biological role, ATP-dependent chaperone involved in the processing of proteins in the endoplasmic reticulum, regulating their transport. Together with MESD, acts as a modulator of the Wnt pathway by promoting the folding of LRP6, a coreceptor of the canonical Wnt pathway. When associated with CNPY3, required for proper folding of Toll-like receptors. Promotes folding and trafficking of TLR4 to the cell surface. May participate in the unfolding of cytosolic leaderless cargos (lacking the secretion signal sequence) such as the interleukin 1/IL-1 to facilitate their translocation into the ERGIC (endoplasmic reticulum-Golgi intermediate compartment) and secretion; the translocation process is mediated by the cargo receptor TMED10. The polypeptide is Endoplasmin (HSP90B1) (Pongo abelii (Sumatran orangutan)).